We begin with the raw amino-acid sequence, 1832 residues long: COPII coat assembly protein sec16 (1832 aa).

7 disordered regions span residues 1 to 163 (MAQP…NDAQ), 183 to 209 (GATV…RDNE), 240 to 269 (LGQG…EDDE), 345 to 863 (QAEL…APVP), 1420 to 1482 (PATG…HGMP), 1509 to 1679 (EDSA…LGEE), and 1692 to 1832 (VNKK…VMAK). Polar residues predominate over residues 57 to 74 (ENGSIESKTAISADTSDQ). Residues 91–118 (SKPDTEEPDKPSRDESIFMQTDKSRAVE) show a composition bias toward basic and acidic residues. The segment covering 123–133 (NVPTENGNVDI) has biased composition (polar residues). Residues 137-151 (LEEHVAEEPHYEGPE) are compositionally biased toward basic and acidic residues. Composition is skewed to acidic residues over residues 257 to 269 (QVDD…EDDE), 348 to 361 (LSDD…TEDD), and 369 to 383 (ELDD…DDDT). The segment covering 422 to 457 (VSYTPHQPSTSDLLSGIPAQNTAAQPTNASMSSYFS) has biased composition (polar residues). The segment covering 471–480 (SFAERSKEGY) has biased composition (basic and acidic residues). Residues 510-524 (VPKPPPRSSSIPAPP) show a composition bias toward pro residues. 2 stretches are compositionally biased toward polar residues: residues 528–546 (STVS…TAPQ) and 590–603 (NQYS…QSNI). Over residues 622-636 (NLLAPNVPSAPAVPS) the composition is skewed to low complexity. Residues 653-665 (KPPPSPRYSPAPP) show a composition bias toward pro residues. Over residues 679 to 688 (YASQPASISG) the composition is skewed to polar residues. The span at 705–721 (YHEKIHYEDQGQSEERP) shows a compositional bias: basic and acidic residues. Over residues 738 to 747 (SEQPVSSENK) the composition is skewed to polar residues. The span at 814–829 (PRRSQTQSPSQTLSPR) shows a compositional bias: low complexity. 4 stretches are compositionally biased toward polar residues: residues 845-854 (HGSTSPTRTV), 1428-1439 (QPVSQYAPSASP), 1513-1538 (SGAQ…SSTY), and 1550-1559 (QAVSTTSQPD). Composition is skewed to basic and acidic residues over residues 1594-1603 (EDKPKKKSIM) and 1620-1644 (KAER…DAKK). The segment covering 1725–1736 (GPPPAMATPPPT) has biased composition (pro residues). The segment covering 1737-1756 (GASGSRPSSSAGAPTSVSAS) has biased composition (low complexity). Residues 1757–1769 (PAPPSLGAPPPAI) are compositionally biased toward pro residues.

This sequence belongs to the SEC16 family.

The protein resides in the endoplasmic reticulum membrane. Functionally, involved in the initiation of assembly of the COPII coat required for the formation of transport vesicles from the endoplasmic reticulum (ER) and the selection of cargo molecules. Also involved in autophagy. In Aspergillus fumigatus (strain ATCC MYA-4609 / CBS 101355 / FGSC A1100 / Af293) (Neosartorya fumigata), this protein is COPII coat assembly protein sec16 (sec16).